We begin with the raw amino-acid sequence, 506 residues long: Maturase K (506 aa).

Belongs to the intron maturase 2 family. MatK subfamily.

It localises to the plastid. Its subcellular location is the chloroplast. Its function is as follows. Usually encoded in the trnK tRNA gene intron. Probably assists in splicing its own and other chloroplast group II introns. This Carica papaya (Papaya) protein is Maturase K.